A 368-amino-acid polypeptide reads, in one-letter code: C6 finger domain transcription factor tcpZ (368 aa).

A DNA-binding region (zn(2)-C6 fungal-type) is located at residues 30-56 (CDACHASKVRCSGEPICARCQRDNVAC). The tract at residues 84–109 (FIEQRQRPAASQPPGHGTSRDSSVCA) is disordered.

The protein localises to the nucleus. Functionally, transcription factor that specifically regulates the thioclapurine biosynthesis gene cluster. The sequence is that of C6 finger domain transcription factor tcpZ from Claviceps purpurea (strain 20.1) (Ergot fungus).